A 210-amino-acid chain; its full sequence is ATP-dependent Clp protease proteolytic subunit (210 aa).

Ser-106 acts as the Nucleophile in catalysis. His-131 is a catalytic residue.

The protein belongs to the peptidase S14 family. Fourteen ClpP subunits assemble into 2 heptameric rings which stack back to back to give a disk-like structure with a central cavity, resembling the structure of eukaryotic proteasomes.

The protein resides in the cytoplasm. The enzyme catalyses Hydrolysis of proteins to small peptides in the presence of ATP and magnesium. alpha-casein is the usual test substrate. In the absence of ATP, only oligopeptides shorter than five residues are hydrolyzed (such as succinyl-Leu-Tyr-|-NHMec, and Leu-Tyr-Leu-|-Tyr-Trp, in which cleavage of the -Tyr-|-Leu- and -Tyr-|-Trp bonds also occurs).. Its function is as follows. Cleaves peptides in various proteins in a process that requires ATP hydrolysis. Has a chymotrypsin-like activity. Plays a major role in the degradation of misfolded proteins. The sequence is that of ATP-dependent Clp protease proteolytic subunit from Bartonella tribocorum (strain CIP 105476 / IBS 506).